Consider the following 317-residue polypeptide: (2S)-3-sulfopropanediol dehydratase activating enzyme (317 aa).

The Radical SAM core domain occupies 18–306 (HDGPGLRTEL…QMLAEYFNQR (289 aa)). Cys-32, Cys-36, Cys-39, Cys-58, Cys-64, Cys-67, Cys-71, Cys-92, Cys-95, Cys-98, and Cys-102 together coordinate [4Fe-4S] cluster. 38–40 (WCS) provides a ligand contact to S-adenosyl-L-methionine. 2 consecutive 4Fe-4S ferredoxin-type domains span residues 49–82 (AQVGVYKTKCISYKKCAACEETCPQENILQFTRG) and 83–112 (KLTSIERHDCTNCLACHNACPSDAIKLWGK). Residues Gly-142 and 191–193 (DIK) each bind S-adenosyl-L-methionine.

The protein belongs to the organic radical-activating enzymes family. Requires [4Fe-4S] cluster as cofactor.

The catalysed reaction is glycyl-[protein] + reduced [flavodoxin] + S-adenosyl-L-methionine = glycin-2-yl radical-[protein] + semiquinone [flavodoxin] + 5'-deoxyadenosine + L-methionine + H(+). It functions in the pathway organosulfur degradation; alkanesulfonate degradation. Involved in the degradation of the organosulfur compound 2(S)-dihydroxypropanesulfonate (DHPS). Catalyzes activation of the (2S)-3-sulfopropanediol dehydratase HpfG under anaerobic conditions by generation of an organic free radical on a glycine residue. The sequence is that of (2S)-3-sulfopropanediol dehydratase activating enzyme from Klebsiella oxytoca.